A 268-amino-acid chain; its full sequence is Ribosomal RNA small subunit methyltransferase A (268 aa).

6 residues coordinate S-adenosyl-L-methionine: asparagine 18, leucine 20, glycine 45, glutamate 66, aspartate 91, and asparagine 112.

The protein belongs to the class I-like SAM-binding methyltransferase superfamily. rRNA adenine N(6)-methyltransferase family. RsmA subfamily.

The protein resides in the cytoplasm. The catalysed reaction is adenosine(1518)/adenosine(1519) in 16S rRNA + 4 S-adenosyl-L-methionine = N(6)-dimethyladenosine(1518)/N(6)-dimethyladenosine(1519) in 16S rRNA + 4 S-adenosyl-L-homocysteine + 4 H(+). Its function is as follows. Specifically dimethylates two adjacent adenosines (A1518 and A1519) in the loop of a conserved hairpin near the 3'-end of 16S rRNA in the 30S particle. May play a critical role in biogenesis of 30S subunits. The polypeptide is Ribosomal RNA small subunit methyltransferase A (Shewanella frigidimarina (strain NCIMB 400)).